The chain runs to 299 residues: Release factor glutamine methyltransferase (299 aa).

Residues 134 to 138 (GTGSG), Asp-157, Trp-186, and Asn-203 contribute to the S-adenosyl-L-methionine site. Substrate is bound at residue 203 to 206 (NPPY).

This sequence belongs to the protein N5-glutamine methyltransferase family. PrmC subfamily.

It catalyses the reaction L-glutaminyl-[peptide chain release factor] + S-adenosyl-L-methionine = N(5)-methyl-L-glutaminyl-[peptide chain release factor] + S-adenosyl-L-homocysteine + H(+). Methylates the class 1 translation termination release factors RF1/PrfA and RF2/PrfB on the glutamine residue of the universally conserved GGQ motif. This chain is Release factor glutamine methyltransferase, found in Synechocystis sp. (strain ATCC 27184 / PCC 6803 / Kazusa).